The following is a 379-amino-acid chain: MTASAVLDLVKDLIARPSVTPDDVDCQMLLAQRLERIGFQCETIARGGVTNLWARRGAGAPLTVFAGHTDVVPPGPRDKWDSDPFVPTERDGFLYGRGAADMKSSIAAFVVAAEEFVAAHPEHPGSIALLITSDEEGPAVDGTVIVCDELRQRGEQLDYCIVGEPTSTEALGDVCKNGRRGSLSGRLLVKGVQGHVAYPHLARNPVHQLAPALTELVAIEWDQGNEYFPPTTFQVSNLHAGTGATNVVPGEAVALFNFRFSTASTPDQLKARVHEVLDRHGLEYQLDWELGGEPFLTPRGSLTDALVSAIQAETGLQAELSTTGGTSDGRFIARICPQVIEFGPCNATIHKVNERIELSSLAPLKNIYRRTLENLLLAD.

H68 is a Zn(2+) binding site. D70 is a catalytic residue. D101 serves as a coordination point for Zn(2+). E135 serves as the catalytic Proton acceptor. Zn(2+) contacts are provided by E136, E164, and H350.

Belongs to the peptidase M20A family. DapE subfamily. As to quaternary structure, homodimer. The cofactor is Zn(2+). Requires Co(2+) as cofactor.

It carries out the reaction N-succinyl-(2S,6S)-2,6-diaminopimelate + H2O = (2S,6S)-2,6-diaminopimelate + succinate. Its pathway is amino-acid biosynthesis; L-lysine biosynthesis via DAP pathway; LL-2,6-diaminopimelate from (S)-tetrahydrodipicolinate (succinylase route): step 3/3. Catalyzes the hydrolysis of N-succinyl-L,L-diaminopimelic acid (SDAP), forming succinate and LL-2,6-diaminopimelate (DAP), an intermediate involved in the bacterial biosynthesis of lysine and meso-diaminopimelic acid, an essential component of bacterial cell walls. This Bordetella parapertussis (strain 12822 / ATCC BAA-587 / NCTC 13253) protein is Succinyl-diaminopimelate desuccinylase.